The primary structure comprises 288 residues: tRNA dimethylallyltransferase (288 aa).

17–24 provides a ligand contact to ATP; that stretch reads GPTASGKT. 19–24 provides a ligand contact to substrate; sequence TASGKT.

This sequence belongs to the IPP transferase family. As to quaternary structure, monomer. Mg(2+) is required as a cofactor.

The catalysed reaction is adenosine(37) in tRNA + dimethylallyl diphosphate = N(6)-dimethylallyladenosine(37) in tRNA + diphosphate. Its function is as follows. Catalyzes the transfer of a dimethylallyl group onto the adenine at position 37 in tRNAs that read codons beginning with uridine, leading to the formation of N6-(dimethylallyl)adenosine (i(6)A). The sequence is that of tRNA dimethylallyltransferase from Jannaschia sp. (strain CCS1).